Reading from the N-terminus, the 440-residue chain is Glutamate-1-semialdehyde 2,1-aminomutase (440 aa).

Lys-273 carries the post-translational modification N6-(pyridoxal phosphate)lysine.

The protein belongs to the class-III pyridoxal-phosphate-dependent aminotransferase family. HemL subfamily. As to quaternary structure, homodimer. The cofactor is pyridoxal 5'-phosphate.

The protein localises to the cytoplasm. It carries out the reaction (S)-4-amino-5-oxopentanoate = 5-aminolevulinate. Its pathway is porphyrin-containing compound metabolism; protoporphyrin-IX biosynthesis; 5-aminolevulinate from L-glutamyl-tRNA(Glu): step 2/2. The polypeptide is Glutamate-1-semialdehyde 2,1-aminomutase (Alkaliphilus metalliredigens (strain QYMF)).